A 75-amino-acid chain; its full sequence is MGSIRPFNVKRTAEELADKFPNVFGDKFEENKKKLEKMMPDVSKRTINMIAGYITRYAVKKKEKAKREIEENSLN.

Belongs to the eukaryotic ribosomal protein eS17 family.

This chain is Small ribosomal subunit protein eS17, found in Thermoplasma acidophilum (strain ATCC 25905 / DSM 1728 / JCM 9062 / NBRC 15155 / AMRC-C165).